We begin with the raw amino-acid sequence, 202 residues long: Potassium-transporting ATPase KdpC subunit (202 aa).

A helical membrane pass occupies residues proline 7–methionine 27. Residues phenylalanine 66 to serine 103 form a disordered region. 2 stretches are compositionally biased toward polar residues: residues serine 71–threonine 84 and alanine 91–proline 101.

It belongs to the KdpC family. In terms of assembly, the system is composed of three essential subunits: KdpA, KdpB and KdpC.

Its subcellular location is the cell inner membrane. In terms of biological role, part of the high-affinity ATP-driven potassium transport (or Kdp) system, which catalyzes the hydrolysis of ATP coupled with the electrogenic transport of potassium into the cytoplasm. This subunit acts as a catalytic chaperone that increases the ATP-binding affinity of the ATP-hydrolyzing subunit KdpB by the formation of a transient KdpB/KdpC/ATP ternary complex. This Bradyrhizobium sp. (strain ORS 278) protein is Potassium-transporting ATPase KdpC subunit.